The following is a 185-amino-acid chain: Sulfopyruvate decarboxylase subunit beta (185 aa).

The protein belongs to the TPP enzyme family. Heterododecamer composed of 6 subunits alpha and 6 subunits beta. The cofactor is thiamine diphosphate.

It carries out the reaction 3-sulfopyruvate + H(+) = sulfoacetaldehyde + CO2. The protein operates within cofactor biosynthesis; coenzyme M biosynthesis; sulfoacetaldehyde from phosphoenolpyruvate and sulfite: step 4/4. Functionally, involved in the biosynthesis of the coenzyme M (2-mercaptoethanesulfonic acid). Catalyzes the decarboxylation of sulfopyruvate to sulfoacetaldehyde. The sequence is that of Sulfopyruvate decarboxylase subunit beta from Methanococcus maripaludis (strain DSM 14266 / JCM 13030 / NBRC 101832 / S2 / LL).